A 347-amino-acid chain; its full sequence is MPRGQKSKLRAREKRRQARGGLEDLIDALDILEEEEESPPSASACLKDVFQSSLDGASNNPHGLREAQSTSTSATAASHTRHPEGVNDQMEERPICTQDLEATDSFPRGPVDEKVIILVHYLLYKYQMKEPITKADMLRNVTQMSKSQFPVILSRASEHLELIFGLDLKEVEPNKHIYVLVNKLDLGCDAKLSDETGVPKTGLLMTVLGIIFTNGNCVAEEEVWKVFNTMGLYDGIEHFMFGEPRKLLTKDLVKENYLEYQQVPNSDPPRYQFLWGPRAHAETSKMKVLEFLAKVNDTAPSEFSNWYTEALQDEEERARARVAAKARVSATAGARSKVKSSKSSQLQ.

The segment covering 1-18 (MPRGQKSKLRAREKRRQA) has biased composition (basic residues). 2 disordered regions span residues 1-20 (MPRGQKSKLRAREKRRQARG) and 56-92 (GASNNPHGLREAQSTSTSATAASHTRHPEGVNDQMEE). Positions 67 to 78 (AQSTSTSATAAS) are enriched in low complexity. Residues 81–92 (RHPEGVNDQMEE) are compositionally biased toward basic and acidic residues. In terms of domain architecture, MAGE spans 111–310 (VDEKVIILVH…SEFSNWYTEA (200 aa)). A disordered region spans residues 328–347 (VSATAGARSKVKSSKSSQLQ).

This is Melanoma-associated antigen B10 (MAGEB10) from Homo sapiens (Human).